A 314-amino-acid polypeptide reads, in one-letter code: Protein phosphatase PTC7 homolog fig (314 aa).

One can recognise a PPM-type phosphatase domain in the interval 43–309; the sequence is PYLVTVVQGR…DDITLILSSV (267 aa). Mn(2+) contacts are provided by aspartate 87, glycine 88, and aspartate 232.

This sequence belongs to the PP2C family. Mg(2+) serves as cofactor. Requires Mn(2+) as cofactor.

It catalyses the reaction O-phospho-L-seryl-[protein] + H2O = L-seryl-[protein] + phosphate. The enzyme catalyses O-phospho-L-threonyl-[protein] + H2O = L-threonyl-[protein] + phosphate. The polypeptide is Protein phosphatase PTC7 homolog fig (Drosophila sechellia (Fruit fly)).